A 131-amino-acid chain; its full sequence is UPF0102 protein YraN (131 aa).

It belongs to the UPF0102 family.

This Salmonella arizonae (strain ATCC BAA-731 / CDC346-86 / RSK2980) protein is UPF0102 protein YraN.